We begin with the raw amino-acid sequence, 424 residues long: GTPase Obg (424 aa).

Residues Met1–Leu158 form the Obg domain. In terms of domain architecture, OBG-type G spans Ala159–Ser331. GTP-binding positions include Gly165–Ser172, Phe190–Lys194, Asp212–Gly215, Asn282–Asp285, and Ser312–Ala314. Residues Ser172 and Thr192 each contribute to the Mg(2+) site. The 80-residue stretch at Arg345–Leu424 folds into the OCT domain.

This sequence belongs to the TRAFAC class OBG-HflX-like GTPase superfamily. OBG GTPase family. In terms of assembly, monomer. Mg(2+) is required as a cofactor.

It is found in the cytoplasm. An essential GTPase which binds GTP, GDP and possibly (p)ppGpp with moderate affinity, with high nucleotide exchange rates and a fairly low GTP hydrolysis rate. Plays a role in control of the cell cycle, stress response, ribosome biogenesis and in those bacteria that undergo differentiation, in morphogenesis control. This chain is GTPase Obg, found in Clostridium novyi (strain NT).